Reading from the N-terminus, the 961-residue chain is Zinc finger protein basonuclin-1 (961 aa).

Positions 210–219 (MTFMLPFQFF) are hydrophobic. C2H2-type zinc fingers lie at residues 325 to 348 (VFCT…NAVH) and 353 to 382 (HKCT…PRLH). Residues 370 to 393 (RNRHSANPNPRLHMPMNRNNRDKD) form a disordered region. The Nuclear localization signal motif lies at 501–507 (PKKKSRK). A phosphoserine mark is found at Ser-505 and Ser-509. Residues 523-572 (EEKRHSLSSDDEVPLQVVSEDEPEDSSPRSDRVPEEQHTQLSLEEPLPQG) form a disordered region. The segment covering 531–547 (SDDEVPLQVVSEDEPED) has biased composition (acidic residues). Positions 548–560 (SSPRSDRVPEEQH) are enriched in basic and acidic residues. 2 consecutive C2H2-type zinc fingers follow at residues 687–711 (FQCD…NTHA) and 715–743 (HACT…SLHQ). The disordered stretch occupies residues 810–864 (ESYNSGPPSEGTILDLSTTSSMKSESSSHSSWDSDGVSEEGTALMEDSDGNCEGQ). Positions 826 to 844 (STTSSMKSESSSHSSWDSD) are enriched in low complexity. 2 C2H2-type zinc fingers span residues 895–918 (ITCH…KTVH) and 923–950 (HKCK…PNLH). Positions 937–961 (VRSRNRHSQNPNLHKSLASSPSHLQ) are disordered.

In terms of assembly, interacts with HSF2BP (via C-terminus). Phosphorylation on Ser-505 and Ser-509 leads to cytoplasmic localization. As to expression, epidermis and germ cells of testis and ovary.

The protein localises to the nucleus. Its subcellular location is the cytoplasm. It is found in the nucleoplasm. In terms of biological role, transcriptional activator. It is likely involved in the regulation of keratinocytes terminal differentiation in squamous epithelia and hair follicles. Required for the maintenance of spermatogenesis. It is involved in the positive regulation of oocyte maturation, probably acting through the control of BMP15 levels and regulation of AKT signaling cascade. May also play a role in the early development of embryos. The polypeptide is Zinc finger protein basonuclin-1 (Bnc1) (Mus musculus (Mouse)).